A 130-amino-acid polypeptide reads, in one-letter code: Large ribosomal subunit protein bL12 (130 aa).

This sequence belongs to the bacterial ribosomal protein bL12 family. As to quaternary structure, homodimer. Part of the ribosomal stalk of the 50S ribosomal subunit. Forms a multimeric L10(L12)X complex, where L10 forms an elongated spine to which 2 to 4 L12 dimers bind in a sequential fashion. Binds GTP-bound translation factors.

In terms of biological role, forms part of the ribosomal stalk which helps the ribosome interact with GTP-bound translation factors. Is thus essential for accurate translation. This chain is Large ribosomal subunit protein bL12, found in Yersinia pestis bv. Antiqua (strain Angola).